Consider the following 270-residue polypeptide: Shikimate dehydrogenase (NADP(+)) (270 aa).

Shikimate is bound by residues 14–16 and threonine 61; that span reads SLS. Lysine 65 functions as the Proton acceptor in the catalytic mechanism. Aspartate 77 lines the NADP(+) pocket. Residues asparagine 86 and aspartate 101 each coordinate shikimate. NADP(+) contacts are provided by residues 125 to 129 and isoleucine 210; that span reads GNGGA. Tyrosine 212 contributes to the shikimate binding site. NADP(+) is bound at residue glycine 233.

It belongs to the shikimate dehydrogenase family. In terms of assembly, homodimer.

The catalysed reaction is shikimate + NADP(+) = 3-dehydroshikimate + NADPH + H(+). The protein operates within metabolic intermediate biosynthesis; chorismate biosynthesis; chorismate from D-erythrose 4-phosphate and phosphoenolpyruvate: step 4/7. In terms of biological role, involved in the biosynthesis of the chorismate, which leads to the biosynthesis of aromatic amino acids. Catalyzes the reversible NADPH linked reduction of 3-dehydroshikimate (DHSA) to yield shikimate (SA). The sequence is that of Shikimate dehydrogenase (NADP(+)) from Clostridium beijerinckii (strain ATCC 51743 / NCIMB 8052) (Clostridium acetobutylicum).